We begin with the raw amino-acid sequence, 530 residues long: Poly(U)-binding-splicing factor PUF60 (530 aa).

The segment at 1–487 (MATATIALGT…EDAEIIVKIF (487 aa)) is inhibits homodimerization. Residue K14 forms a Glycyl lysine isopeptide (Lys-Gly) (interchain with G-Cter in SUMO2) linkage. T31 is subject to Phosphothreonine. An inhibits transcriptional repression, interaction with ERCC3 and apoptosis induction region spans residues 48-530 (QSIKSVLVKQ…ERFDNSDLSA (483 aa)). Residue K51 forms a Glycyl lysine isopeptide (Lys-Gly) (interchain with G-Cter in SUMO2) linkage. S83 carries the post-translational modification Phosphoserine. RRM domains follow at residues 100 to 178 (CRVY…RPSN) and 197 to 275 (NRIY…KAVT). Residue S215 is modified to Phosphoserine. The residue at position 222 (K222) is an N6-acetyllysine. T285 carries the phosphothreonine modification. The interval 387–408 (KKEKEEEELFPESERPEMLSEQ) is disordered. K390 participates in a covalent cross-link: Glycyl lysine isopeptide (Lys-Gly) (interchain with G-Cter in SUMO2). Residues 398–408 (ESERPEMLSEQ) show a composition bias toward basic and acidic residues. K425 is modified (N6-acetyllysine). K429 is covalently cross-linked (Glycyl lysine isopeptide (Lys-Gly) (interchain with G-Cter in SUMO2)). The region spanning 433 to 520 (TVMVLRNMVD…RKVVAEVYDQ (88 aa)) is the RRM 3; atypical domain.

It belongs to the RRM half pint family. Homodimer. Associates with the spliceosome. Found in a complex with RO60 and Y5 RNA. Found in a complex with FUBP1 and far upstream element (FUSE) DNA segment. Interacts directly with ERCC3. Interacts with CDK7 and GTF2H1. Interacts with SRSF11/P54. Interacts with ARGLU1; interaction may be involved in ARGLU1-mediated modulation of alternative splicing.

It is found in the nucleus. DNA- and RNA-binding protein, involved in several nuclear processes such as pre-mRNA splicing, apoptosis and transcription regulation. In association with FUBP1 regulates MYC transcription at the P2 promoter through the core-TFIIH basal transcription factor. Acts as a transcriptional repressor through the core-TFIIH basal transcription factor. Represses FUBP1-induced transcriptional activation but not basal transcription. Decreases ERCC3 helicase activity. Is also involved in pre-mRNA splicing. Promotes splicing of an intron with weak 3'-splice site and pyrimidine tract in a cooperative manner with U2AF2. Involved in apoptosis induction when overexpressed in HeLa cells. Modulates alternative splicing of several mRNAs. Binds to relaxed DNA of active promoter regions. Binds to the pyrimidine tract and 3'-splice site regions of pre-mRNA; binding is enhanced in presence of U2AF2. Binds to Y5 RNA in association with RO60. Binds to poly(U) RNA. The polypeptide is Poly(U)-binding-splicing factor PUF60 (Bos taurus (Bovine)).